The primary structure comprises 1171 residues: Protein diaphanous homolog 3 (1171 aa).

Positions 1-15 are enriched in basic and acidic residues; sequence MERHRARALGRDSKS. A disordered region spans residues 1–40; sequence MERHRARALGRDSKSSRRKGLQSAPPAGPYEPGEKRPKLH. The Nuclear localization signal motif lies at 16–39; it reads SRRKGLQSAPPAGPYEPGEKRPKL. Position 47 is a phosphothreonine (threonine 47). A Phosphoserine modification is found at serine 56. Residues 60 to 95 are disordered; that stretch reads PGSKKERPPLPHLKTVSGISDSSSLSSETMENNPKA. Positions 76–86 are enriched in low complexity; the sequence is SGISDSSSLSS. In terms of domain architecture, GBD/FH3 spans 93–455; sequence PKALPESEVL…QIVLHRDGTD (363 aa). At serine 154 the chain carries Phosphoserine. Coiled-coil stretches lie at residues 373 to 403 and 478 to 533; these read EHKEEDLSEFFHRLEDIRAELDEASDVYSML and QAKL…FGAL. The disordered stretch occupies residues 532-601; sequence ALPPGTKIPL…PPPPLGFLGG (70 aa). One can recognise an FH1 domain in the interval 540 to 610; the sequence is PLQPSVEGEA…GQSSIPLNLP (71 aa). Positions 553-596 are enriched in pro residues; that stretch reads ALPPAPPALSGGVPPPPPPPPPPPPPLPGMPMPFGGPVPPPPPL. At serine 604 the chain carries Phosphoserine. The region spanning 615–1013 is the FH2 domain; it reads PKKEFKPEIS…EKRARIAKER (399 aa). Coiled coils occupy residues 887-918 and 988-1038; these read DKASRVSVEMLEKNVKQMGRQLQQLEKNLETF and MLAL…GDET. Residues 1036–1066 form the DAD domain; it reads DETGVMDSLLEALQSGAAFRDRRKRTPKLKD. Residues serine 1072 and serine 1157 each carry the phosphoserine modification. The short motif at 1162–1171 is the Nuclear export signal element; that stretch reads EALLARLRAL.

It belongs to the formin homology family. Diaphanous subfamily. Post-translationally, ubiquitinated.

Its subcellular location is the cytoplasm. It is found in the nucleus. Functionally, actin nucleation and elongation factor required for the assembly of F-actin structures, such as actin cables and stress fibers. Required for cytokinesis, stress fiber formation and transcriptional activation of the serum response factor. Binds to GTP-bound form of Rho and to profilin: acts in a Rho-dependent manner to recruit profilin to the membrane, where it promotes actin polymerization. DFR proteins couple Rho and Src tyrosine kinase during signaling and the regulation of actin dynamics. Also acts as an actin nucleation and elongation factor in the nucleus by promoting nuclear actin polymerization inside the nucleus to drive serum-dependent SRF-MRTFA activity. The sequence is that of Protein diaphanous homolog 3 (Diaph3) from Mus musculus (Mouse).